The primary structure comprises 138 residues: Basic phospholipase A2 BP-II (138 aa).

The first 16 residues, 1-16 (MRTLWIMAVLLVGVDG), serve as a signal peptide directing secretion. 7 disulfide bridges follow: Cys-42-Cys-132, Cys-44-Cys-60, Cys-59-Cys-112, Cys-65-Cys-138, Cys-66-Cys-105, Cys-73-Cys-98, and Cys-91-Cys-103. The Ca(2+) site is built by Gly-45 and Gly-47. His-63 is an active-site residue. Residue Asp-106 is part of the active site.

The protein belongs to the phospholipase A2 family. Group II subfamily. K49 sub-subfamily. As to quaternary structure, exists as a monomer in both solution and crystal states. In the presence of SDS or probably in the presence of phospholipids, assembles to form SDS-resistant stable oligomers. Ca(2+) serves as cofactor. As to expression, expressed by the venom gland.

It is found in the secreted. The catalysed reaction is a 1,2-diacyl-sn-glycero-3-phosphocholine + H2O = a 1-acyl-sn-glycero-3-phosphocholine + a fatty acid + H(+). In terms of biological role, snake venom phospholipase A2 (PLA2) that shows anticoagulant activities, strong myolytic activity, infiltration of polymorphonuclear cells, and edema in stromal tissues. Induces cell death of Jurkat cells in a concentration-dependent manner. Shows a low phospholipase A2 activity. PLA2 catalyzes the calcium-dependent hydrolysis of the 2-acyl groups in 3-sn-phosphoglycerides. This Protobothrops flavoviridis (Habu) protein is Basic phospholipase A2 BP-II.